Reading from the N-terminus, the 599-residue chain is MSQTAYRTHHATEVTEALVGQKVTLAGWVDRRRDHGGVAFIDLRDSTGLVQVVIYDEDMARPLRSEFVIQITGEVRLRPDGNENTHLATGKIEVVAETIEILAKSDALPFQVSTALENESENKLPGEDVRLKYRYLDLRRPSMQYNLKLRSDMAKAARHALEDMDFTEVETPTFIKSTPEGARDFVVPARLVPGSWYALPQSPQLLKQLLMVSGVERYYQLARCYRDEDFRADRQPEFTQLDMEMAYVDQEDVMAMTEKVIAAIWKSAGYEVQLPLPRITWKDAMDKYGSDKPDLRFGNPLVELTEYFKNTPFRVFQAPYVGAVVFKGGAATPRRQFDAWQDWARQRGAKGLAYVVFGENGELKGPVAKNLSDEERNGLREAVGAEEGDAVFFAAGSRESAQLLLGAVRVELASREGLLDPKKFAFTWVVDFPLFKPTDDPDDDDVAVGHSKWTSMHHPFTMPSKDWIDKFDKDPEHAMSDSYDIVCNGEEMGGGSVRIHRDDIQARVLDVLGITKEEADEKFGFLLEAFKYGAPPHAGLALGWDRTVSILAGADSIRDVIAFPKAGGGRDPLTGAPAPISDEQRAETGVDYDPDADEN.

L-aspartate is bound at residue E180. Positions 204-207 (QLLK) are aspartate. R226 lines the L-aspartate pocket. Residues 226 to 228 (RDE) and Q235 each bind ATP. Residue H457 participates in L-aspartate binding. E491 lines the ATP pocket. Residue R498 coordinates L-aspartate. Residue 543–546 (GWDR) coordinates ATP. Residues 565–599 (KAGGGRDPLTGAPAPISDEQRAETGVDYDPDADEN) form a disordered region. Positions 590–599 (VDYDPDADEN) are enriched in acidic residues.

It belongs to the class-II aminoacyl-tRNA synthetase family. Type 1 subfamily. Homodimer.

The protein resides in the cytoplasm. It carries out the reaction tRNA(Asx) + L-aspartate + ATP = L-aspartyl-tRNA(Asx) + AMP + diphosphate. In terms of biological role, aspartyl-tRNA synthetase with relaxed tRNA specificity since it is able to aspartylate not only its cognate tRNA(Asp) but also tRNA(Asn). Reaction proceeds in two steps: L-aspartate is first activated by ATP to form Asp-AMP and then transferred to the acceptor end of tRNA(Asp/Asn). In Bifidobacterium longum (strain NCC 2705), this protein is Aspartate--tRNA(Asp/Asn) ligase.